Here is a 548-residue protein sequence, read N- to C-terminus: ADP,ATP carrier protein 1 (548 aa).

The next 2 membrane-spanning stretches (helical) occupy residues 39-59 (RPVFTYMSIILFLVSYIYSVS) and 75-95 (SIPYLKVLVVLPVNICIVFSI). An N-linked (GlcNAc...) asparagine glycan is attached at asparagine 101. The next 8 helical transmembrane spans lie at 107-127 (VFSIMCVMFGIYFCLYGTVLM), 149-169 (MVFMGLQWTIALALPVNSWTS), 171-191 (LMYLSAEIWGTVVFQFLFFAL), 204-224 (FIPLFLVFGNVALIVSGFSMK), 239-259 (LFFRKLVFVLMGICSFVIYLI), 302-322 (LVLAISFVVIAYSVSVNMVEA), 350-370 (IQLAVGALSIILLLSSFPALI), and 374-394 (GFLYVAFVPPIFCIFGMASVF). 2 N-linked (GlcNAc...) asparagine glycosylation sites follow: asparagine 400 and asparagine 406. A helical membrane pass occupies residues 410–430 (LGFVSIGENLWLEQLLGAIIV). N-linked (GlcNAc...) asparagine glycosylation is present at asparagine 488. A helical membrane pass occupies residues 494–514 (KAAISSLTIVTVITACWGFAV).

It belongs to the ADP/ATP translocase tlc family.

Its subcellular location is the cell membrane. Its function is as follows. ATP transporter involved in the uptake of ATP from the host cell cytoplasm. Provides the microsporidian cell with host ATP in exchange for ADP. This is an obligate exchange system. This energy acquiring activity is an important component of microsporidian parasitism. This Paranosema grylli (Microsporidian parasite) protein is ADP,ATP carrier protein 1 (ANC1).